Reading from the N-terminus, the 285-residue chain is MSAMDLSSLQTVIDTAFDNRDTITLSTKGEVRDAVEQSLALLDQGKVRVATRGEDGQWTVHQWLKKAVLLSFRLNDMEVVKGGPGASTWWDKVPSKFEGWGENQFRAAGFRAVPNAVVRHSAFIAPNAILMPSFVNLGAYVGEGTMVDTWATVGSCAQIGRHVHLSGGVGIGGVLEPMQAGPTIIEDNCFIGARSEVVEGCIIREGAVLGMGVYIGKSTKIIDRATGEVMYGEVPPYSVVVAGSMPSPNTMPNGLPAPSLYCAVIVKRVDAQTRSKTGINELLRD.

R111 and D148 together coordinate substrate.

The protein belongs to the transferase hexapeptide repeat family. Homotrimer.

The protein resides in the cytoplasm. The catalysed reaction is (S)-2,3,4,5-tetrahydrodipicolinate + succinyl-CoA + H2O = (S)-2-succinylamino-6-oxoheptanedioate + CoA. Its pathway is amino-acid biosynthesis; L-lysine biosynthesis via DAP pathway; LL-2,6-diaminopimelate from (S)-tetrahydrodipicolinate (succinylase route): step 1/3. The chain is 2,3,4,5-tetrahydropyridine-2,6-dicarboxylate N-succinyltransferase from Allorhizobium ampelinum (strain ATCC BAA-846 / DSM 112012 / S4) (Agrobacterium vitis (strain S4)).